Consider the following 312-residue polypeptide: Bark storage protein A (312 aa).

An N-terminal signal peptide occupies residues 1–24; the sequence is MPQQSMQASLIDPIAEIERSNCKI. An N-linked (GlcNAc...) asparagine glycan is attached at N70.

It to wound-inducible poplar endochitinases. In terms of assembly, monomer. Bark.

May play a role in nitrogen storage. The chain is Bark storage protein A (BSPA) from Populus deltoides (Eastern poplar).